Reading from the N-terminus, the 734-residue chain is Meiotic driver SPOK1 (734 aa).

A coiled-coil region spans residues 4 to 41; sequence KDRIAQLLRELEEAKARVEEAKAREAQERCEKERLQLE. Disordered regions lie at residues 180–222 and 414–499; these read ELTQ…ICSN and LSSA…MADP. Residues 416 to 429 show a composition bias toward polar residues; it reads SAPSSQNTDISEYT. The segment covering 457–468 has biased composition (basic and acidic residues); that stretch reads NEHDEHDEDHSE.

It localises to the cytoplasm. It is found in the nucleus. Its function is as follows. Promotes unequal transmission of alleles from the parental zygote to progeny spores by acting as poison/antidote system, leading to poisoning of progeny that do not inherit the allele. May possess DNA nuclease activity that leads to spore killing, and a kinase activity that confers resistance to the nuclease activity. Can suppress meiotic drive by the P.anserina SPOK2, SPOK3 and SPOK4 proteins. In Podospora comata, this protein is Meiotic driver SPOK1.